A 523-amino-acid polypeptide reads, in one-letter code: AarF domain-containing protein kinase 1 (523 aa).

Residues 148–484 form the Protein kinase domain; sequence EFEEKPLGAA…SLWSYIHISL (337 aa). ATP contacts are provided by residues 154–162 and K176; that span reads LGAASLAQV. The Proton acceptor role is filled by D308.

It belongs to the protein kinase superfamily. ADCK protein kinase family.

Its subcellular location is the mitochondrion. Functionally, appears to be essential for maintaining mitochondrial cristae formation and mitochondrial function by acting via YME1L1 in a kinase-independent manner to regulate essential mitochondrial structural proteins OPA1 and IMMT. The action of this enzyme is not yet clear. It is not known if it has protein kinase activity and what type of substrate it would phosphorylate (Ser, Thr or Tyr). This Xenopus tropicalis (Western clawed frog) protein is AarF domain-containing protein kinase 1 (adck1).